A 319-amino-acid chain; its full sequence is MAVQACALSLRLGLWMSLLLPVLPGAGARAAGARWSGEGTTPHLQSIFLGRCAEYTTLLSLEPGNKNCTAIWEAFKVVLDKDPCSVLPSDYDLFINLSRHAIPRDKSLFWENNHLLVMSYAENTRRLMPLCDVLYGKVGDFLSWCRQENASGLDYQSCPTAEDCENNAVDAYWKSASMQYSRDSSGVINVMLNGSEPKGAYPTKGFFADFEIPYLQKDKITRIEIWVMHEVGGPHVESCGEGSVKILEDRLEALGFQHSCINDYPPVKFLMCVDHSTHPDCAMNSASASMWRESPALHAIGDISLIISLLVALASSSQA.

An N-terminal signal peptide occupies residues 1-33 (MAVQACALSLRLGLWMSLLLPVLPGAGARAAGA). 3 cysteine pairs are disulfide-bonded: C52–C68, C84–C164, and C145–C158. N67 and N96 each carry an N-linked (GlcNAc...) asparagine glycan. W110 is a binding site for NAD(+). W110 is a nicotinamide binding site. N-linked (GlcNAc...) asparagine glycosylation occurs at N149. Residue W173 coordinates NAD(+). Residue N193 is glycosylated (N-linked (GlcNAc...) asparagine). E211 is an NAD(+) binding site. Intrachain disulfides connect C239–C260 and C272–C281. The GPI-anchor amidated serine moiety is linked to residue S294. The propeptide occupies 295–319 (PALHAIGDISLIISLLVALASSSQA).

It belongs to the ADP-ribosyl cyclase family. As to quaternary structure, homodimer. Pancreatic islets, kidney, spleen, heart, thymus, intestine and salivary gland.

The protein resides in the cell membrane. It catalyses the reaction NAD(+) + H2O = ADP-D-ribose + nicotinamide + H(+). It carries out the reaction NAD(+) = cyclic ADP-beta-D-ribose + nicotinamide + H(+). The catalysed reaction is cyclic ADP-beta-D-ribose + H2O = ADP-D-ribose. In terms of biological role, catalyzes both the synthesis of cyclic ADP-beta-D-ribose (cADPR) from NAD(+), and its hydrolysis to ADP-D-ribose (ADPR). Cyclic ADPR is known to serve as an endogenous second messenger that elicits calcium release from intracellular stores, and thus regulates the mobilization of intracellular calcium. May be involved in pre-B-cell growth. This Rattus norvegicus (Rat) protein is ADP-ribosyl cyclase/cyclic ADP-ribose hydrolase 2 (Bst1).